The following is a 79-amino-acid chain: Large ribosomal subunit protein uL24 (79 aa).

Belongs to the universal ribosomal protein uL24 family. As to quaternary structure, part of the 50S ribosomal subunit.

One of two assembly initiator proteins, it binds directly to the 5'-end of the 23S rRNA, where it nucleates assembly of the 50S subunit. Its function is as follows. One of the proteins that surrounds the polypeptide exit tunnel on the outside of the subunit. The protein is Large ribosomal subunit protein uL24 of Lactobacillus gasseri (strain ATCC 33323 / DSM 20243 / BCRC 14619 / CIP 102991 / JCM 1131 / KCTC 3163 / NCIMB 11718 / NCTC 13722 / AM63).